The chain runs to 218 residues: Trichothecene biosynthesis transcription regulator TRI6 (218 aa).

The interval 154-181 is disordered; the sequence is SQSTNDPGDAGKKGFATRKDRARHEAKH. Residues 162–176 show a composition bias toward basic and acidic residues; that stretch reads DAGKKGFATRKDRAR. The C2H2-type zinc-finger motif lies at 185-215; it reads IRCQWRDNNGDQCTRTFSRMDNMRDHFRRIH.

The protein localises to the nucleus. Its function is as follows. Transcriptional activator of part of the trichothecene biosynthesis cluster that mediates the production of the antimicrobial trichothecene harzianum A (HA) that plays a role in Botrytis cinerea antagonistic activity and plant defense priming. Regulates expression of both trichothecene and mevalonate pathway genes. The sequence is that of Trichothecene biosynthesis transcription regulator TRI6 from Trichoderma arundinaceum.